A 496-amino-acid polypeptide reads, in one-letter code: Acetyl-coenzyme A carboxylase carboxyl transferase subunit beta, chloroplastic (496 aa).

The region spanning Leu-229–Lys-496 is the CoA carboxyltransferase N-terminal domain. Positions 233, 236, 252, and 255 each coordinate Zn(2+). The segment at Cys-233–Cys-255 adopts a C4-type zinc-finger fold.

This sequence belongs to the AccD/PCCB family. Acetyl-CoA carboxylase is a heterohexamer composed of biotin carboxyl carrier protein, biotin carboxylase and 2 subunits each of ACCase subunit alpha and ACCase plastid-coded subunit beta (accD). Requires Zn(2+) as cofactor.

Its subcellular location is the plastid. It is found in the chloroplast stroma. The catalysed reaction is N(6)-carboxybiotinyl-L-lysyl-[protein] + acetyl-CoA = N(6)-biotinyl-L-lysyl-[protein] + malonyl-CoA. Its pathway is lipid metabolism; malonyl-CoA biosynthesis; malonyl-CoA from acetyl-CoA: step 1/1. Its function is as follows. Component of the acetyl coenzyme A carboxylase (ACC) complex. Biotin carboxylase (BC) catalyzes the carboxylation of biotin on its carrier protein (BCCP) and then the CO(2) group is transferred by the transcarboxylase to acetyl-CoA to form malonyl-CoA. The chain is Acetyl-coenzyme A carboxylase carboxyl transferase subunit beta, chloroplastic from Ranunculus macranthus (Large buttercup).